Here is a 394-residue protein sequence, read N- to C-terminus: Na(+)/H(+) antiporter NhaA (394 aa).

11 helical membrane passes run Ala14–Leu34, Leu59–Val79, Val95–Phe115, Gly125–Gly145, Val154–Phe174, Val179–Trp199, Leu213–Val233, Gly254–Val274, Ile292–Val312, Ile328–Leu348, and Leu363–Val383.

The protein belongs to the NhaA Na(+)/H(+) (TC 2.A.33) antiporter family.

The protein resides in the cell inner membrane. It catalyses the reaction Na(+)(in) + 2 H(+)(out) = Na(+)(out) + 2 H(+)(in). In terms of biological role, na(+)/H(+) antiporter that extrudes sodium in exchange for external protons. The sequence is that of Na(+)/H(+) antiporter NhaA from Yersinia pestis bv. Antiqua (strain Antiqua).